A 137-amino-acid chain; its full sequence is Putative nickel-responsive regulator (137 aa).

Positions 79, 90, 92, and 98 each coordinate Ni(2+).

It belongs to the transcriptional regulatory CopG/NikR family. Ni(2+) serves as cofactor.

Its function is as follows. Transcriptional regulator. In Campylobacter concisus (strain 13826), this protein is Putative nickel-responsive regulator.